Consider the following 600-residue polypeptide: MDKKKYIRNFSIVAHIDHGKSTLADRLLEKTGTLTQREMEQQVLDTMELEKERGITIKSQAARLIYKRENGEEYILNLIDTPGHVDFTYEVSRSLAACEGAILVVDATQGIQAQTLANCYLALDNDLEIVPVINKVDLASARPDEIKQEIEDVIGIEAEDAPLVSAKTGLNIEDVLEEIVEKIPAPEGDENAPLKALIFDSYYDSYKGVVCHIRVKDGKVKPGTKIKLMSTDKVYEVVETGVFTPALMPLKEGLSAGEVGYITASIKNVRDARVGDTVTEAARPTEEALPGYKPAIPMVYSGIYPVDGAKYEELKEALEKLQINDAALSFEPETSVALGFGFRCGFLGLLHMEIIQERVEREFNLDIITTAPSVIYKVTKTNGESFDLTNPTNLPPMTEIAYMEEPVVKASIITPTDYTGAVMELCQDRRGKFIDMQYLEETRVVIHYEIPLNEIVYDFFDTLKSKTRGYASLDYELKGYEQSKLVKLDILLNGDNVDALSMIVPEVKAYQRGRAIAEKLKEIIPRHMFEVPIQAAVGSKIIARETVKAMRKDVLAKCYGGDISRKKKLLEKQKEGKKRMRQLGTVEVPQEAFMSVLKVD.

The tr-type G domain occupies 5 to 187 (KYIRNFSIVA…EIVEKIPAPE (183 aa)). Residues 17–22 (DHGKST) and 134–137 (NKVD) contribute to the GTP site.

The protein belongs to the TRAFAC class translation factor GTPase superfamily. Classic translation factor GTPase family. LepA subfamily.

Its subcellular location is the cell membrane. The enzyme catalyses GTP + H2O = GDP + phosphate + H(+). Required for accurate and efficient protein synthesis under certain stress conditions. May act as a fidelity factor of the translation reaction, by catalyzing a one-codon backward translocation of tRNAs on improperly translocated ribosomes. Back-translocation proceeds from a post-translocation (POST) complex to a pre-translocation (PRE) complex, thus giving elongation factor G a second chance to translocate the tRNAs correctly. Binds to ribosomes in a GTP-dependent manner. The protein is Elongation factor 4 of Clostridium perfringens (strain 13 / Type A).